A 115-amino-acid polypeptide reads, in one-letter code: Large ribosomal subunit protein uL24 (115 aa).

The protein belongs to the universal ribosomal protein uL24 family. As to quaternary structure, part of the 50S ribosomal subunit.

Its function is as follows. One of two assembly initiator proteins, it binds directly to the 5'-end of the 23S rRNA, where it nucleates assembly of the 50S subunit. Functionally, one of the proteins that surrounds the polypeptide exit tunnel on the outside of the subunit. This is Large ribosomal subunit protein uL24 from Acaryochloris marina (strain MBIC 11017).